Here is a 456-residue protein sequence, read N- to C-terminus: Ribonuclease inhibitor (456 aa).

Methionine 1 bears the N-acetylmethionine mark. LRR repeat units follow at residues 15–43, 44–71, 72–100, 101–128, 129–157, 158–185, 186–214, 215–242, 243–271, 272–299, 300–328, 329–356, 357–385, 386–413, and 414–442; these read WTEL…CKDI, GSAL…VHLV, LQGL…CGVL, PSTL…LRLL, CEGL…CEPL, ASVL…ARVL, GQGL…CKDL, CGIV…IAEL, CPGL…CRDL, CRVL…ARLL, CESL…CQHV, SLML…IQEL, CQAL…CSSL, ASLL…VLQL, and LGSL…EDRL. Serine 86 carries the post-translational modification Phosphoserine.

As to quaternary structure, forms high-affinity heterodimers with RNASE1, ANG and RNASE2.

It localises to the cytoplasm. Its subcellular location is the nucleus. In terms of biological role, ribonuclease inhibitor which inhibits RNASE1, RNASE2 and angiogenin (ANG). May play a role in redox homeostasis. Required to inhibit the cytotoxic tRNA ribonuclease activity of ANG in the cytoplasm in absence of stress. Relocates to the nucleus in response to stress, relieving inhibition of ANG in the cytoplasm, and inhibiting the angiogenic activity of ANG in the nucleus. The sequence is that of Ribonuclease inhibitor (RNH1) from Sus scrofa (Pig).